Here is a 367-residue protein sequence, read N- to C-terminus: DNA polymerase IV (367 aa).

Residues 14 to 198 (IIHIDMDAFF…LPIAKFHGVG (185 aa)) enclose the UmuC domain. 2 residues coordinate Mg(2+): aspartate 18 and aspartate 116. Residue glutamate 117 is part of the active site.

Belongs to the DNA polymerase type-Y family. In terms of assembly, monomer. Requires Mg(2+) as cofactor.

The protein localises to the cytoplasm. The catalysed reaction is DNA(n) + a 2'-deoxyribonucleoside 5'-triphosphate = DNA(n+1) + diphosphate. In terms of biological role, poorly processive, error-prone DNA polymerase involved in untargeted mutagenesis. Copies undamaged DNA at stalled replication forks, which arise in vivo from mismatched or misaligned primer ends. These misaligned primers can be extended by PolIV. Exhibits no 3'-5' exonuclease (proofreading) activity. May be involved in translesional synthesis, in conjunction with the beta clamp from PolIII. The chain is DNA polymerase IV from Streptococcus thermophilus (strain ATCC BAA-491 / LMD-9).